A 432-amino-acid chain; its full sequence is Adenylosuccinate synthetase (432 aa).

GTP contacts are provided by residues 11–17 and 39–41; these read GDEGKGK and GHT. Catalysis depends on Asp12, which acts as the Proton acceptor. The Mg(2+) site is built by Asp12 and Gly39. IMP is bound by residues 12 to 15, 37 to 40, Thr134, Arg148, Asn230, Thr245, and Arg309; these read DEGK and NAGH. His40 (proton donor) is an active-site residue. 305–311 is a binding site for substrate; that stretch reads VTTGRKR. GTP contacts are provided by residues Arg311, 337-339, and 419-421; these read KLD and GTG.

Belongs to the adenylosuccinate synthetase family. Homodimer. Requires Mg(2+) as cofactor.

The protein localises to the cytoplasm. The enzyme catalyses IMP + L-aspartate + GTP = N(6)-(1,2-dicarboxyethyl)-AMP + GDP + phosphate + 2 H(+). The protein operates within purine metabolism; AMP biosynthesis via de novo pathway; AMP from IMP: step 1/2. Plays an important role in the de novo pathway and in the salvage pathway of purine nucleotide biosynthesis. Catalyzes the first committed step in the biosynthesis of AMP from IMP. The sequence is that of Adenylosuccinate synthetase from Kluyveromyces lactis (strain ATCC 8585 / CBS 2359 / DSM 70799 / NBRC 1267 / NRRL Y-1140 / WM37) (Yeast).